The chain runs to 397 residues: Acetate kinase 1 (397 aa).

Position 8 (asparagine 8) interacts with Mg(2+). Lysine 15 is an ATP binding site. Arginine 89 lines the substrate pocket. Aspartate 146 functions as the Proton donor/acceptor in the catalytic mechanism. Residues histidine 206–glycine 210, aspartate 281–arginine 283, and glycine 329–asparagine 333 contribute to the ATP site. Position 380 (glutamate 380) interacts with Mg(2+).

This sequence belongs to the acetokinase family. As to quaternary structure, homodimer. Mg(2+) serves as cofactor. Mn(2+) is required as a cofactor.

It is found in the cytoplasm. The catalysed reaction is acetate + ATP = acetyl phosphate + ADP. The protein operates within metabolic intermediate biosynthesis; acetyl-CoA biosynthesis; acetyl-CoA from acetate: step 1/2. In terms of biological role, catalyzes the formation of acetyl phosphate from acetate and ATP. Can also catalyze the reverse reaction. This chain is Acetate kinase 1, found in Listeria monocytogenes serotype 4b (strain F2365).